Consider the following 100-residue polypeptide: Large ribosomal subunit protein uL23 (100 aa).

The protein belongs to the universal ribosomal protein uL23 family. Part of the 50S ribosomal subunit. Contacts protein L29, and trigger factor when it is bound to the ribosome.

Its function is as follows. One of the early assembly proteins it binds 23S rRNA. One of the proteins that surrounds the polypeptide exit tunnel on the outside of the ribosome. Forms the main docking site for trigger factor binding to the ribosome. This chain is Large ribosomal subunit protein uL23, found in Bradyrhizobium diazoefficiens (strain JCM 10833 / BCRC 13528 / IAM 13628 / NBRC 14792 / USDA 110).